We begin with the raw amino-acid sequence, 525 residues long: Bifunctional pantoate ligase/cytidylate kinase (525 aa).

Residues 1-292 (MDNVPIIRTV…VGSARLIDNM (292 aa)) form a pantoate--beta-alanine ligase region. 44–51 (MGALHAGH) is an ATP binding site. Histidine 51 functions as the Proton donor in the catalytic mechanism. Glutamine 75 contacts (R)-pantoate. Position 75 (glutamine 75) interacts with beta-alanine. 162–165 (GQKD) contributes to the ATP binding site. Position 168 (glutamine 168) interacts with (R)-pantoate. Residues isoleucine 191 and 199-202 (LSSR) each bind ATP. The interval 293–525 (LLDARLPILA…LYQERFPDRA (233 aa)) is cytidylate kinase.

This sequence in the N-terminal section; belongs to the pantothenate synthetase family. The protein in the C-terminal section; belongs to the cytidylate kinase family. Type 1 subfamily.

It localises to the cytoplasm. It carries out the reaction (R)-pantoate + beta-alanine + ATP = (R)-pantothenate + AMP + diphosphate + H(+). It catalyses the reaction CMP + ATP = CDP + ADP. The enzyme catalyses dCMP + ATP = dCDP + ADP. The protein operates within cofactor biosynthesis; (R)-pantothenate biosynthesis; (R)-pantothenate from (R)-pantoate and beta-alanine: step 1/1. In terms of biological role, catalyzes the condensation of pantoate with beta-alanine in an ATP-dependent reaction via a pantoyl-adenylate intermediate. Catalyzes the transfer of a phosphate group from ATP to either CMP or dCMP to form CDP or dCDP and ADP, respectively. This is Bifunctional pantoate ligase/cytidylate kinase from Acaryochloris marina (strain MBIC 11017).